A 225-amino-acid polypeptide reads, in one-letter code: NAD(P)H-quinone oxidoreductase subunit K, chloroplastic (225 aa).

Residues C43, C44, C108, and C139 each coordinate [4Fe-4S] cluster.

It belongs to the complex I 20 kDa subunit family. NDH is composed of at least 16 different subunits, 5 of which are encoded in the nucleus. The cofactor is [4Fe-4S] cluster.

It is found in the plastid. Its subcellular location is the chloroplast thylakoid membrane. It catalyses the reaction a plastoquinone + NADH + (n+1) H(+)(in) = a plastoquinol + NAD(+) + n H(+)(out). The enzyme catalyses a plastoquinone + NADPH + (n+1) H(+)(in) = a plastoquinol + NADP(+) + n H(+)(out). Its function is as follows. NDH shuttles electrons from NAD(P)H:plastoquinone, via FMN and iron-sulfur (Fe-S) centers, to quinones in the photosynthetic chain and possibly in a chloroplast respiratory chain. The immediate electron acceptor for the enzyme in this species is believed to be plastoquinone. Couples the redox reaction to proton translocation, and thus conserves the redox energy in a proton gradient. This is NAD(P)H-quinone oxidoreductase subunit K, chloroplastic from Draba nemorosa (Woodland whitlowgrass).